Reading from the N-terminus, the 663-residue chain is Methionine--tRNA ligase (663 aa).

The 'HIGH' region signature appears at 10–20; the sequence is AYTNGPLHLGH. Residues Cys142, Cys145, Cys154, and Cys157 each contribute to the Zn(2+) site. The 'KMSKS' region motif lies at 323-327; it reads KMSTS. Thr326 provides a ligand contact to ATP. The tRNA-binding domain maps to 563–663; that stretch reads YFTKVDLRVG…REISLGSKIH (101 aa).

It belongs to the class-I aminoacyl-tRNA synthetase family. MetG type 1 subfamily. Homodimer. Zn(2+) is required as a cofactor.

Its subcellular location is the cytoplasm. The catalysed reaction is tRNA(Met) + L-methionine + ATP = L-methionyl-tRNA(Met) + AMP + diphosphate. In terms of biological role, is required not only for elongation of protein synthesis but also for the initiation of all mRNA translation through initiator tRNA(fMet) aminoacylation. In Methanococcus vannielii (strain ATCC 35089 / DSM 1224 / JCM 13029 / OCM 148 / SB), this protein is Methionine--tRNA ligase.